The sequence spans 147 residues: Hemoglobin subunit epsilon (147 aa).

Residues 3–147 (HFTAEEKAAI…VAIALGHKYH (145 aa)) enclose the Globin domain. A phosphoserine mark is found at Ser14 and Ser51. His64 and His93 together coordinate heme b.

The protein belongs to the globin family. Heterotetramer of two alpha chains and two epsilon chains in early embryonic hemoglobin Gower-2; two zeta chains and two epsilon chains in early embryonic hemoglobin Gower-1. As to expression, red blood cells.

Its function is as follows. The epsilon chain is a beta-type chain of early mammalian embryonic hemoglobin. In Pithecia irrorata (Gray monk saki), this protein is Hemoglobin subunit epsilon (HBE1).